A 118-amino-acid chain; its full sequence is Large ribosomal subunit protein uL18 (118 aa).

Belongs to the universal ribosomal protein uL18 family. Part of the 50S ribosomal subunit; part of the 5S rRNA/L5/L18/L25 subcomplex. Contacts the 5S and 23S rRNAs.

In terms of biological role, this is one of the proteins that bind and probably mediate the attachment of the 5S RNA into the large ribosomal subunit, where it forms part of the central protuberance. This chain is Large ribosomal subunit protein uL18, found in Mycoplasmopsis pulmonis (strain UAB CTIP) (Mycoplasma pulmonis).